The following is a 343-amino-acid chain: Isopentenyl-diphosphate delta-isomerase (343 aa).

9-10 lines the substrate pocket; sequence RK. FMN-binding positions include serine 66, 67-69, serine 98, and asparagine 126; that span reads SMT. 98–100 provides a ligand contact to substrate; the sequence is SQR. A substrate-binding site is contributed by glutamine 161. Glutamate 162 provides a ligand contact to Mg(2+). FMN is bound by residues lysine 193, threonine 223, 273-275, and 294-295; these read GIR and AA.

Belongs to the IPP isomerase type 2 family. In terms of assembly, homooctamer. Dimer of tetramers. FMN is required as a cofactor. The cofactor is NADPH. Requires Mg(2+) as cofactor.

The protein localises to the cytoplasm. It carries out the reaction isopentenyl diphosphate = dimethylallyl diphosphate. Its function is as follows. Involved in the biosynthesis of isoprenoids. Catalyzes the 1,3-allylic rearrangement of the homoallylic substrate isopentenyl (IPP) to its allylic isomer, dimethylallyl diphosphate (DMAPP). In Hydrogenovibrio crunogenus (strain DSM 25203 / XCL-2) (Thiomicrospira crunogena), this protein is Isopentenyl-diphosphate delta-isomerase.